The following is a 364-amino-acid chain: Phospho-N-acetylmuramoyl-pentapeptide-transferase (364 aa).

A run of 10 helical transmembrane segments spans residues 3-23 (AILF…RVAI), 51-71 (TMGG…AKLI), 80-100 (ALLL…DDFI), 116-136 (MIGL…SWLE), 154-174 (IGWI…IIAA), 185-205 (LDGL…FVNI), 229-249 (PLDL…FLWW), 256-276 (IFMG…LAIL), 281-301 (LLLI…MLQV), and 341-361 (FWII…AEWV).

The protein belongs to the glycosyltransferase 4 family. MraY subfamily. Requires Mg(2+) as cofactor.

It is found in the cell membrane. The enzyme catalyses UDP-N-acetyl-alpha-D-muramoyl-L-alanyl-gamma-D-glutamyl-meso-2,6-diaminopimeloyl-D-alanyl-D-alanine + di-trans,octa-cis-undecaprenyl phosphate = di-trans,octa-cis-undecaprenyl diphospho-N-acetyl-alpha-D-muramoyl-L-alanyl-D-glutamyl-meso-2,6-diaminopimeloyl-D-alanyl-D-alanine + UMP. It participates in cell wall biogenesis; peptidoglycan biosynthesis. In terms of biological role, catalyzes the initial step of the lipid cycle reactions in the biosynthesis of the cell wall peptidoglycan: transfers peptidoglycan precursor phospho-MurNAc-pentapeptide from UDP-MurNAc-pentapeptide onto the lipid carrier undecaprenyl phosphate, yielding undecaprenyl-pyrophosphoryl-MurNAc-pentapeptide, known as lipid I. This is Phospho-N-acetylmuramoyl-pentapeptide-transferase from Nocardioides sp. (strain ATCC BAA-499 / JS614).